The primary structure comprises 390 residues: uncharacterized protein (390 aa).

The region spanning 215–325 (SRFKRKTLGK…KLIKDCEMVE (111 aa)) is the Glutaredoxin domain.

This is an uncharacterized protein from Arabidopsis thaliana (Mouse-ear cress).